Reading from the N-terminus, the 244-residue chain is Aspartate/glutamate leucyltransferase (244 aa).

The protein belongs to the R-transferase family. Bpt subfamily.

It localises to the cytoplasm. The enzyme catalyses N-terminal L-glutamyl-[protein] + L-leucyl-tRNA(Leu) = N-terminal L-leucyl-L-glutamyl-[protein] + tRNA(Leu) + H(+). It catalyses the reaction N-terminal L-aspartyl-[protein] + L-leucyl-tRNA(Leu) = N-terminal L-leucyl-L-aspartyl-[protein] + tRNA(Leu) + H(+). In terms of biological role, functions in the N-end rule pathway of protein degradation where it conjugates Leu from its aminoacyl-tRNA to the N-termini of proteins containing an N-terminal aspartate or glutamate. The chain is Aspartate/glutamate leucyltransferase from Paramagnetospirillum magneticum (strain ATCC 700264 / AMB-1) (Magnetospirillum magneticum).